We begin with the raw amino-acid sequence, 515 residues long: Nectin-1 (515 aa).

An N-terminal signal peptide occupies residues 1–30 (MARMGLAGAAGRWWGLALGLTAFFLPGAHT). The Ig-like V-type domain maps to 31–141 (QVVQVNDSMY…GNRESQLNLT (111 aa)). Topologically, residues 31–355 (QVVQVNDSMY…GRRAGQVPTA (325 aa)) are extracellular. N36, N72, N139, N202, N286, N297, N307, and N332 each carry an N-linked (GlcNAc...) asparagine glycan. C51 and C124 are joined by a disulfide. Ig-like C2-type domains lie at 145 to 243 (KPTN…TLNV) and 247 to 334 (PEVT…VNIT). Disulfide bonds link C172/C226 and C269/C316. The tract at residues 282–299 (WTTLNGSLPKGVEAQNRT) is interaction with FGFR. A helical transmembrane segment spans residues 356-376 (IIGGVVGSILLVLFVVGGIVV). At 377-515 (ALCRRRHTFK…SFISKKEWYV (139 aa)) the chain is on the cytoplasmic side. Residues 400–486 (YSKAGIPQHH…DGYGDRTLGY (87 aa)) are disordered. Phosphoserine is present on residues S422, S434, and S435. Phosphotyrosine is present on Y436. Over residues 436–445 (YEEEEEEEGG) the composition is skewed to acidic residues. The span at 446–464 (GGERKVGGPHPKYDEDAKR) shows a compositional bias: basic and acidic residues. S509 carries the post-translational modification Phosphoserine.

Belongs to the nectin family. In terms of assembly, (Microbial infection) Interacts with herpes pseudorabies virus/PRV envelope glycoprotein D.

The protein localises to the cell membrane. It localises to the cell junction. It is found in the adherens junction. The protein resides in the presynaptic cell membrane. Functionally, (Microbial infection) Acts as a receptor for herpes simplex virus 1/HHV-1, herpes simplex virus 2/HHV-2, and pseudorabies virus/PRV. The sequence is that of Nectin-1 from Sus scrofa (Pig).